The primary structure comprises 80 residues: Large ribosomal subunit protein bL31B (80 aa).

Belongs to the bacterial ribosomal protein bL31 family. Type B subfamily. In terms of assembly, part of the 50S ribosomal subunit.

The protein is Large ribosomal subunit protein bL31B of Xylella fastidiosa (strain 9a5c).